The following is a 249-amino-acid chain: Derlin-2 (249 aa).

Topologically, residues 1-21 are cytoplasmic; it reads MAQAVEEWYRQMPIITRSYLT. Residues 22–42 traverse the membrane as a helical segment; that stretch reads AAVVTTVGCTLEIISPYHLYL. Residues 43–96 lie on the Lumenal side of the membrane; that stretch reads NPKLVVQHYEIWRLVTNFLYFRKMDLDFLFHMFFLARYCKLLEENSFRGRTADF. A helical transmembrane segment spans residues 97–117; it reads FYMLLFGATVLTGIVLIGGMI. Topologically, residues 118 to 122 are cytoplasmic; it reads PYISE. Residues 123–143 traverse the membrane as a helical segment; that stretch reads TFARILFLSNSLTFMMVYVWS. The Lumenal segment spans residues 144-152; it reads KHNPFIHMS. The chain crosses the membrane as a helical span at residues 153 to 173; the sequence is FLGLFTFTAAYLPWVLLGFSI. Residues 174-249 lie on the Cytoplasmic side of the membrane; the sequence is LVGSSTWVDL…GAMGADPQAQ (76 aa).

Belongs to the derlin family.

Its subcellular location is the endoplasmic reticulum membrane. Its function is as follows. May be involved in the degradation process of specific misfolded endoplasmic reticulum (ER) luminal proteins. This is Derlin-2 (DER2) from Oryza sativa subsp. japonica (Rice).